The chain runs to 1641 residues: Alpha-2-macroglobulin (1641 aa).

A signal peptide spans 1–31 (MRDRVAMMLRPLVRGWIPRAVLLLTVAFSFG). Cysteine 32 is lipidated: N-palmitoyl cysteine. A lipid anchor (S-diacylglycerol cysteine) is attached at cysteine 32. Residues 1166-1169 (CAEQ) constitute a cross-link (isoglutamyl cysteine thioester (Cys-Gln)).

The protein belongs to the protease inhibitor I39 (alpha-2-macroglobulin) family. Bacterial alpha-2-macroglobulin subfamily.

It is found in the cell membrane. Functionally, protects the bacterial cell from host peptidases. The sequence is that of Alpha-2-macroglobulin from Xylella fastidiosa (strain 9a5c).